The primary structure comprises 219 residues: Elongation factor Ts (219 aa).

Residues 82–85 (TDFV) form an involved in Mg(2+) ion dislocation from EF-Tu region.

This sequence belongs to the EF-Ts family.

It localises to the cytoplasm. Its function is as follows. Associates with the EF-Tu.GDP complex and induces the exchange of GDP to GTP. It remains bound to the aminoacyl-tRNA.EF-Tu.GTP complex up to the GTP hydrolysis stage on the ribosome. In Gloeobacter violaceus (strain ATCC 29082 / PCC 7421), this protein is Elongation factor Ts.